The sequence spans 771 residues: Chaperone protein dnaK3 (771 aa).

A Phosphothreonine; by autocatalysis modification is found at threonine 198. The interval 624-771 is disordered; it reads FDDDDDYYNR…GWDDDDDDWF (148 aa). Basic and acidic residues-rich tracts occupy residues 630-652 and 708-734; these read YYNR…RYDD and YDDR…RENA.

It belongs to the heat shock protein 70 family.

In terms of biological role, acts as a chaperone. The chain is Chaperone protein dnaK3 (dnaK3) from Synechocystis sp. (strain ATCC 27184 / PCC 6803 / Kazusa).